We begin with the raw amino-acid sequence, 484 residues long: tRNA sulfurtransferase (484 aa).

The THUMP domain maps to 63–167 (QAFGERLACI…GDKLYMVTKR (105 aa)). Residues 185 to 186 (LI), K267, G289, and Q298 contribute to the ATP site. A disulfide bridge links C346 with C458. The region spanning 406–484 (IDTNEVVIDI…GYHNVKVYRP (79 aa)) is the Rhodanese domain. The active-site Cysteine persulfide intermediate is the C458.

Belongs to the ThiI family.

It localises to the cytoplasm. The enzyme catalyses [ThiI sulfur-carrier protein]-S-sulfanyl-L-cysteine + a uridine in tRNA + 2 reduced [2Fe-2S]-[ferredoxin] + ATP + H(+) = [ThiI sulfur-carrier protein]-L-cysteine + a 4-thiouridine in tRNA + 2 oxidized [2Fe-2S]-[ferredoxin] + AMP + diphosphate. It carries out the reaction [ThiS sulfur-carrier protein]-C-terminal Gly-Gly-AMP + S-sulfanyl-L-cysteinyl-[cysteine desulfurase] + AH2 = [ThiS sulfur-carrier protein]-C-terminal-Gly-aminoethanethioate + L-cysteinyl-[cysteine desulfurase] + A + AMP + 2 H(+). It participates in cofactor biosynthesis; thiamine diphosphate biosynthesis. Its function is as follows. Catalyzes the ATP-dependent transfer of a sulfur to tRNA to produce 4-thiouridine in position 8 of tRNAs, which functions as a near-UV photosensor. Also catalyzes the transfer of sulfur to the sulfur carrier protein ThiS, forming ThiS-thiocarboxylate. This is a step in the synthesis of thiazole, in the thiamine biosynthesis pathway. The sulfur is donated as persulfide by IscS. This is tRNA sulfurtransferase from Shewanella sp. (strain ANA-3).